We begin with the raw amino-acid sequence, 622 residues long: Protein lev-9 (622 aa).

The N-terminal stretch at 1–16 is a signal peptide; that stretch reads MRFLLLLAISITYASA. The region spanning 17–61 is the WAP; atypical domain; it reads LSCPEVTLSQRPKHCKKECIADEDCKRNKRCMCDGECGLSCVNPI. 19 disulfide bridges follow: C19–C49, C35–C47, C41–C57, C64–C105, C91–C118, C124–C171, C154–C188, C193–C233, C219–C246, C251–C291, C277–C304, C309–C349, C335–C362, C366–C409, C395–C420, C425–C467, C452–C481, C486–C543, and C529–C556. 8 Sushi domains span residues 62 to 120, 122 to 190, 191 to 248, 249 to 306, 307 to 364, 365 to 422, 423 to 483, and 484 to 558; these read AMCH…VCRL, LKCG…RCKA, RACP…NCKA, TECS…RCEE, IRCS…RCLA, SCRV…VCSP, LSCH…KCLP, and SWCE…KCVS. N411 is a glycosylation site (N-linked (GlcNAc...) asparagine). A propeptide spanning residues 576 to 622 is cleaved from the precursor; it reads SLPGRAVREYVDDELSTHRQHSGKCGIVSGKLERMIMQHSDNGVSVC.

In terms of processing, proteolytic processing of the C-terminus is required for clustering activity but not for secretion nor traffic.

The protein resides in the synapse. It localises to the secreted. In terms of biological role, scaffolding protein that is necessary to cluster acetylcholine receptors at neuromuscular junctions. This chain is Protein lev-9 (lev-9), found in Caenorhabditis elegans.